Here is a 52-residue protein sequence, read N- to C-terminus: MCGKILLILFFIMTLSACQVNHIRDVKGGTVAPSSSSRLTGLKLSKRSKDPL.

An N-terminal signal peptide occupies residues 1-17 (MCGKILLILFFIMTLSA). C18 is lipidated: N-palmitoyl cysteine. The S-diacylglycerol cysteine moiety is linked to residue C18.

Its subcellular location is the cell outer membrane. Functionally, lysis proteins are required for both colicin release and partial cell lysis. In Escherichia coli, this protein is Lysis protein for colicin N (cnl).